The chain runs to 408 residues: 3-hydroxy-3-methylglutaryl-coenzyme A reductase (408 aa).

Active-site charge relay system residues include E101 and D307. H403 acts as the Proton donor in catalysis.

It belongs to the HMG-CoA reductase family.

It carries out the reaction (R)-mevalonate + 2 NADP(+) + CoA = (3S)-3-hydroxy-3-methylglutaryl-CoA + 2 NADPH + 2 H(+). It participates in metabolic intermediate biosynthesis; (R)-mevalonate biosynthesis; (R)-mevalonate from acetyl-CoA: step 3/3. Functionally, converts HMG-CoA to mevalonate. In Pyrococcus abyssi (strain GE5 / Orsay), this protein is 3-hydroxy-3-methylglutaryl-coenzyme A reductase (hmgA).